Here is a 358-residue protein sequence, read N- to C-terminus: Glutamate--cysteine ligase (358 aa).

It belongs to the glutamate--cysteine ligase type 2 family. YbdK subfamily.

The enzyme catalyses L-cysteine + L-glutamate + ATP = gamma-L-glutamyl-L-cysteine + ADP + phosphate + H(+). Catalyzes the synthesis of gamma-glutamylcysteine (gamma-GC), the main low-molecular-weight thiol compound instead of glutathione in halophilic archaea. The protein is Glutamate--cysteine ligase of Haloferax volcanii (strain ATCC 29605 / DSM 3757 / JCM 8879 / NBRC 14742 / NCIMB 2012 / VKM B-1768 / DS2) (Halobacterium volcanii).